Here is a 361-residue protein sequence, read N- to C-terminus: tRNA-specific 2-thiouridylase MnmA (361 aa).

ATP is bound by residues 11–18 (GMSGGVDS) and Met-37. The interaction with target base in tRNA stretch occupies residues 97–99 (NPD). The active-site Nucleophile is the Cys-102. A disulfide bridge links Cys-102 with Cys-199. Gly-126 serves as a coordination point for ATP. The segment at 149-151 (KDQ) is interaction with tRNA. Cys-199 (cysteine persulfide intermediate) is an active-site residue. Residues 311 to 312 (RY) are interaction with tRNA.

Belongs to the MnmA/TRMU family.

It localises to the cytoplasm. It carries out the reaction S-sulfanyl-L-cysteinyl-[protein] + uridine(34) in tRNA + AH2 + ATP = 2-thiouridine(34) in tRNA + L-cysteinyl-[protein] + A + AMP + diphosphate + H(+). Its function is as follows. Catalyzes the 2-thiolation of uridine at the wobble position (U34) of tRNA, leading to the formation of s(2)U34. The protein is tRNA-specific 2-thiouridylase MnmA of Cupriavidus necator (strain ATCC 17699 / DSM 428 / KCTC 22496 / NCIMB 10442 / H16 / Stanier 337) (Ralstonia eutropha).